Here is a 267-residue protein sequence, read N- to C-terminus: Coiled-coil domain-containing protein 90B, mitochondrial (267 aa).

The N-terminal 47 residues, 1 to 47, are a transit peptide targeting the mitochondrion; the sequence is MKGSQLYRHLSLQGNRLHLHLFQGKKLQLHPSQGHKGTAHRTWKKGF. Residues 142–175 are a coiled coil; it reads LEKSEFATLRAENEKMKIELEHVRQHLLNETNRI. A helical transmembrane segment spans residues 244–266; sequence TVRYMAASVFTCLAIALGFYRLW.

Belongs to the CCDC90 family.

The protein resides in the mitochondrion membrane. The protein is Coiled-coil domain-containing protein 90B, mitochondrial (ccdc90b) of Xenopus tropicalis (Western clawed frog).